Here is a 249-residue protein sequence, read N- to C-terminus: 3-deoxy-D-manno-octulosonic acid kinase (249 aa).

Asp175 is a catalytic residue.

The protein belongs to the protein kinase superfamily. KdkA/RfaP family.

It localises to the cell inner membrane. The enzyme catalyses an alpha-Kdo-(2-&gt;6)-lipid IVA + ATP = a 4-O-phospho-alpha-Kdo-(2-&gt;6)-lipid IVA + ADP + H(+). The protein operates within bacterial outer membrane biogenesis; LPS core biosynthesis. Its function is as follows. Catalyzes the ATP-dependent phosphorylation of the 3-deoxy-D-manno-octulosonic acid (Kdo) residue in Kdo-lipid IV(A) at the 4-OH position. The polypeptide is 3-deoxy-D-manno-octulosonic acid kinase (Xanthomonas euvesicatoria pv. vesicatoria (strain 85-10) (Xanthomonas campestris pv. vesicatoria)).